The chain runs to 152 residues: MAGAYAARCTQGRAFRSGLEDKVSKQLESKGIKFDYELWRIPYVIPESDHLYTPDFLLPNGIFIETKGLWDSDDRKKHLLIREQHPELDIRLVFSSSRSKLYKGSPTSYGEWCEKHGILFADKLIPVAGVKEPKKEVPFDKFKTKKGVKKNG.

It catalyses the reaction Endonucleolytic cleavage to 5'-phosphooligonucleotide end-products.. In terms of biological role, endodeoxyribonuclease I, which is expressed in the late stage, is necessary for T3 genetic recombination and the breakdown of host DNA. In the early stage of infection, T3 DNA replicates as a linear monomer. In the late stage, the T3 DNA replicates via linear concatemers several genomes in length. The gene 3 product has also been implicated in the maturation of these concatemers. This Enterobacteria phage T3 (Bacteriophage T3) protein is Endodeoxyribonuclease 1 (3).